A 96-amino-acid chain; its full sequence is Co-chaperonin GroES (96 aa).

This sequence belongs to the GroES chaperonin family. Heptamer of 7 subunits arranged in a ring. Interacts with the chaperonin GroEL.

It localises to the cytoplasm. Together with the chaperonin GroEL, plays an essential role in assisting protein folding. The GroEL-GroES system forms a nano-cage that allows encapsulation of the non-native substrate proteins and provides a physical environment optimized to promote and accelerate protein folding. GroES binds to the apical surface of the GroEL ring, thereby capping the opening of the GroEL channel. The polypeptide is Co-chaperonin GroES (Delftia acidovorans (strain DSM 14801 / SPH-1)).